The primary structure comprises 442 residues: Probable protein phosphatase 2C 15 (442 aa).

The region spanning 35–303 (AAERPELQVG…DDTTCIVVDI (269 aa)) is the PPM-type phosphatase domain. Mn(2+) contacts are provided by Asp80, Gly81, Asp255, and Asp294. Positions 420–434 (KKEAMEGKRRSRDSS) are enriched in basic and acidic residues. Residues 420 to 442 (KKEAMEGKRRSRDSSSRNSGSSE) are disordered.

Belongs to the PP2C family. Mg(2+) serves as cofactor. The cofactor is Mn(2+).

It carries out the reaction O-phospho-L-seryl-[protein] + H2O = L-seryl-[protein] + phosphate. It catalyses the reaction O-phospho-L-threonyl-[protein] + H2O = L-threonyl-[protein] + phosphate. In Oryza sativa subsp. japonica (Rice), this protein is Probable protein phosphatase 2C 15.